The primary structure comprises 159 residues: Large ribosomal subunit protein uL15 (159 aa).

Positions 1 to 11 (MKLNELRDNEG) are enriched in basic and acidic residues. Residues 1-40 (MKLNELRDNEGARYQSKRLGRGIGSGKGKTSGKGVKGQTS) are disordered. The span at 21-35 (RGIGSGKGKTSGKGV) shows a compositional bias: gly residues.

This sequence belongs to the universal ribosomal protein uL15 family. In terms of assembly, part of the 50S ribosomal subunit.

Its function is as follows. Binds to the 23S rRNA. In Paramagnetospirillum magneticum (strain ATCC 700264 / AMB-1) (Magnetospirillum magneticum), this protein is Large ribosomal subunit protein uL15.